Consider the following 759-residue polypeptide: LPS-assembly protein LptD (759 aa).

The N-terminal stretch at 1–22 (MPLPIPRLLIPALLLASGASLA) is a signal peptide.

It belongs to the LptD family. As to quaternary structure, component of the lipopolysaccharide transport and assembly complex. Interacts with LptE and LptA.

The protein localises to the cell outer membrane. Functionally, together with LptE, is involved in the assembly of lipopolysaccharide (LPS) at the surface of the outer membrane. In Alcanivorax borkumensis (strain ATCC 700651 / DSM 11573 / NCIMB 13689 / SK2), this protein is LPS-assembly protein LptD.